The chain runs to 405 residues: SPbeta prophage-derived uncharacterized protein YomR (405 aa).

Residues 9-36 are a coiled coil; it reads QLKQNNIQINSLRGSNDRAEKHMLEHEQ.

This is SPbeta prophage-derived uncharacterized protein YomR (yomR) from Bacillus subtilis (strain 168).